Here is a 71-residue protein sequence, read N- to C-terminus: DNA-directed RNA polymerase subunit epsilon (71 aa).

Belongs to the RNA polymerase subunit epsilon family. As to quaternary structure, RNAP is composed of a core of 2 alpha, a beta and a beta' subunit. The core is associated with a delta subunit, and at least one of epsilon or omega. When a sigma factor is associated with the core the holoenzyme is formed, which can initiate transcription.

It catalyses the reaction RNA(n) + a ribonucleoside 5'-triphosphate = RNA(n+1) + diphosphate. Functionally, a non-essential component of RNA polymerase (RNAP). This chain is DNA-directed RNA polymerase subunit epsilon, found in Staphylococcus carnosus (strain TM300).